We begin with the raw amino-acid sequence, 369 residues long: Phosphate acyltransferase (369 aa).

The disordered stretch occupies residues 342 to 369 (ASRAPNSQTAGGERAAAVPQSAQLRMDS).

It belongs to the PlsX family. As to quaternary structure, homodimer. Probably interacts with PlsY.

The protein localises to the cytoplasm. It catalyses the reaction a fatty acyl-[ACP] + phosphate = an acyl phosphate + holo-[ACP]. The protein operates within lipid metabolism; phospholipid metabolism. Catalyzes the reversible formation of acyl-phosphate (acyl-PO(4)) from acyl-[acyl-carrier-protein] (acyl-ACP). This enzyme utilizes acyl-ACP as fatty acyl donor, but not acyl-CoA. This chain is Phosphate acyltransferase, found in Methylocella silvestris (strain DSM 15510 / CIP 108128 / LMG 27833 / NCIMB 13906 / BL2).